Consider the following 521-residue polypeptide: Vascular endothelial zinc finger 1 (521 aa).

Residues 74-96 form a C2H2-type 1 zinc finger; sequence FVCTYCSKAFRDSYHLRRHESCH. Positions 140-155 are enriched in low complexity; sequence TTSSSGTNPSSSASTT. The segment at 140–167 is disordered; it reads TTSSSGTNPSSSASTTAMPVTQSVKKPS. C2H2-type zinc fingers lie at residues 174-196, 202-224, 232-255, 261-283, and 287-308; these read HACEMCGKAFRDVYHLNRHKLSH, FECPICNQRFKRKDRMTYHVRSH, YTCSVCGKGFSRPDHLSCHVKHVH, FKCQTCTAAFATKDRLRTHMVRH, and VSCNICGKLLSAAYITSHLKTH. Residue Lys362 is modified to N6-acetyllysine. A run of 4 repeats spans residues 394–400, 445–451, 457–463, and 479–485. Positions 394 to 485 are 4 X 7 AA repeats of P-[LV]-T-[IL]-T-[ST]-P; that stretch reads PVTLTTPFSI…IAHPVTITSP (92 aa).

This sequence belongs to the krueppel C2H2-type zinc-finger protein family. Interacts with ARHGAP22. As to expression, ubiquitously expressed. Highest levels in skeletal muscle and kidney.

It is found in the nucleus. Possible transcription factor. Specifically binds to the CT/GC-rich region of the interleukin-3 promoter and mediates tax transactivation of IL-3. In Homo sapiens (Human), this protein is Vascular endothelial zinc finger 1 (VEZF1).